Reading from the N-terminus, the 777-residue chain is Zygote defective protein 12 (777 aa).

Basic and acidic residues-rich tracts occupy residues 1–10 and 18–36; these read MLDLTNKESE and KYED…PFKE. Residues 1-36 are disordered; the sequence is MLDLTNKESESSDNGNSKYEDSIDGREVGTSKPFKE. Positions 1 to 234 are interaction with dli-1; it reads MLDLTNKESE…ESSGKLNGNG (234 aa). Residues 44–169 form the Calponin-homology (CH) domain; it reads QADLADMAVW…VTLAHIGKNA (126 aa). 2 disordered regions span residues 217–242 and 273–292; these read QSEL…RSNA and SFET…DISI. A compositionally biased stretch (low complexity) spans 218–235; sequence SELNSLSESSGKLNGNGS. Coiled coils occupy residues 236–399 and 425–688; these read SERR…HHVK and NTEL…QENR. Residues 273-288 are compositionally biased toward polar residues; it reads SFETAQHDMSSNSESG. Residues 747-767 traverse the membrane as a helical segment; that stretch reads AMASILVLGFLVFIAWMFINI. Positions 749 to 777 are interaction with unc-84; it reads ASILVLGFLVFIAWMFININSALNAPPNA.

The protein belongs to the hook family. Homodimer. Interacts with the dynein subunit dli-1 via its N-terminus. May interact with microtubules. Interacts with sut-2. Interacts (via C-terminus) with unc-84 (via C-terminus); the interaction is direct. Expressed in the syncytial gonad, oocytes, and in all cells during the development of the early embryo.

The protein resides in the nucleus membrane. It is found in the cytoplasm. The protein localises to the cytoskeleton. It localises to the microtubule organizing center. Its subcellular location is the centrosome. Functionally, cytoskeletal linker protein, which is essential for attachment of the centrosome to the nucleus. Required for dynein localization to the nuclear envelope. Forms a LINC (LInker of Nucleoskeleton and Cytoskeleton) complex together with unc-84, that may be involved in DNA damage repair. In Caenorhabditis elegans, this protein is Zygote defective protein 12.